The chain runs to 147 residues: Peptide deformylase (147 aa).

Cysteine 88 and histidine 130 together coordinate Fe cation. Glutamate 131 is a catalytic residue. A Fe cation-binding site is contributed by histidine 134.

It belongs to the polypeptide deformylase family. Requires Fe(2+) as cofactor.

It carries out the reaction N-terminal N-formyl-L-methionyl-[peptide] + H2O = N-terminal L-methionyl-[peptide] + formate. Its function is as follows. Removes the formyl group from the N-terminal Met of newly synthesized proteins. Requires at least a dipeptide for an efficient rate of reaction. N-terminal L-methionine is a prerequisite for activity but the enzyme has broad specificity at other positions. The polypeptide is Peptide deformylase (Clostridium botulinum (strain Alaska E43 / Type E3)).